Reading from the N-terminus, the 845-residue chain is Putative DEAD-box ATP-dependent RNA helicase 33 (845 aa).

2 disordered regions span residues Gly129–Pro149 and Lys282–Lys302. The segment covering Ser289 to Gly298 has biased composition (acidic residues). A Q motif motif is present at residues Lys375–Asp403. Positions Leu406 to Tyr590 constitute a Helicase ATP-binding domain. Residue Ala419–Ser426 participates in ATP binding. Residues Asp538–Asp541 carry the DEAD box motif. One can recognise a Helicase C-terminal domain in the interval Leu624–Asp778.

Belongs to the DEAD box helicase family.

The catalysed reaction is ATP + H2O = ADP + phosphate + H(+). This is Putative DEAD-box ATP-dependent RNA helicase 33 (RH33) from Arabidopsis thaliana (Mouse-ear cress).